A 155-amino-acid polypeptide reads, in one-letter code: MKENVFDVLIYLFENYLDRDTEQAPDPDEMRTELLEAGFPQREINRAFDWLETLGAQQPMRAASLPAFRIFSSEELAKLDVECRGFLMFLEQNGILTAASREVVIDRLMALNEEIISLENLKWVVLMVLFSQPSEEVAFARMENLVYESFPGYIH.

The protein belongs to the Smg family.

This Methylococcus capsulatus (strain ATCC 33009 / NCIMB 11132 / Bath) protein is Protein Smg homolog.